Reading from the N-terminus, the 368-residue chain is Proline-rich protein 5-like (368 aa).

Phosphoserine is present on Ser28. The segment at 312-368 is disordered; that stretch reads LGEESGGEDKCLLLQPSFPPPHRQCSSEPNITDGPDEPEQGATGSQEDSELNCASLS. A compositionally biased stretch (polar residues) spans 353–368; the sequence is ATGSQEDSELNCASLS.

The protein belongs to the PROTOR family. Interacts with the mammalian target of rapamycin complex 2 (mTORC2) which contains MTOR, MLST8, PRR5, RICTOR, MAPKAP1 and DEPTOR. Interacts with RFFL. Interacts (via C-terminus) with ZFP36 (via C-terminus); this interaction may accelerate ZFP36-mediated mRNA decay during stress. Interacts with RICTOR. In terms of processing, ubiquitinated. Ubiquitination by RFFL promotes proteasomal degradation of PRR5L thereby modifying the substrate-specific activity of the mTORC2 complex. Ubiquitination by RFFL is stimulated by LPA/lysophosphatidic acid.

Its function is as follows. Associates with the mTORC2 complex that regulates cellular processes including survival and organization of the cytoskeleton. Regulates the activity of the mTORC2 complex in a substrate-specific manner preventing for instance the specific phosphorylation of PKCs and thereby controlling cell migration. Plays a role in the stimulation of ZFP36-mediated mRNA decay of several ZFP36-associated mRNAs, such as TNF-alpha and GM-CSF, in response to stress. Required for ZFP36 localization to cytoplasmic stress granule (SG) and P-body (PB) in response to stress. This chain is Proline-rich protein 5-like (PRR5L), found in Bos taurus (Bovine).